Reading from the N-terminus, the 288-residue chain is 4-hydroxy-tetrahydrodipicolinate synthase (288 aa).

Residue threonine 47 participates in pyruvate binding. Tyrosine 136 functions as the Proton donor/acceptor in the catalytic mechanism. Lysine 164 functions as the Schiff-base intermediate with substrate in the catalytic mechanism. Isoleucine 204 provides a ligand contact to pyruvate.

This sequence belongs to the DapA family. Homotetramer; dimer of dimers.

It is found in the cytoplasm. It carries out the reaction L-aspartate 4-semialdehyde + pyruvate = (2S,4S)-4-hydroxy-2,3,4,5-tetrahydrodipicolinate + H2O + H(+). The protein operates within amino-acid biosynthesis; L-lysine biosynthesis via DAP pathway; (S)-tetrahydrodipicolinate from L-aspartate: step 3/4. Functionally, catalyzes the condensation of (S)-aspartate-beta-semialdehyde [(S)-ASA] and pyruvate to 4-hydroxy-tetrahydrodipicolinate (HTPA). The sequence is that of 4-hydroxy-tetrahydrodipicolinate synthase from Leuconostoc mesenteroides subsp. mesenteroides (strain ATCC 8293 / DSM 20343 / BCRC 11652 / CCM 1803 / JCM 6124 / NCDO 523 / NBRC 100496 / NCIMB 8023 / NCTC 12954 / NRRL B-1118 / 37Y).